The chain runs to 165 residues: Large ribosomal subunit protein uL15 (165 aa).

Residues 1–44 form a disordered region; it reads MSLNQLKAPRGANRAKKRVGRGQGSGLGKTAGRGGKGQKARSGN. The segment covering 21 to 37 has biased composition (gly residues); sequence RGQGSGLGKTAGRGGKG.

Belongs to the universal ribosomal protein uL15 family. As to quaternary structure, part of the 50S ribosomal subunit.

Binds to the 23S rRNA. In Anaeromyxobacter dehalogenans (strain 2CP-C), this protein is Large ribosomal subunit protein uL15.